The sequence spans 54 residues: UPF0391 membrane protein BAV1230 (54 aa).

2 helical membrane-spanning segments follow: residues 5–25 (AAVF…GIAA) and 27–47 (AAGI…LSVL).

It belongs to the UPF0391 family.

The protein localises to the cell membrane. This Bordetella avium (strain 197N) protein is UPF0391 membrane protein BAV1230.